Here is a 550-residue protein sequence, read N- to C-terminus: Acetyl-coenzyme A transporter 1 (550 aa).

Topologically, residues 1 to 74 (MSPTISHKDN…KRSYRAELSS (74 aa)) are cytoplasmic. The residue at position 42 (serine 42) is a Phosphoserine. A helical transmembrane segment spans residues 75–95 (ILLLLFLYVLQGIPLGLAGSI). Residues 96-113 (PLILQSKNVSYTDQAFFS) lie on the Extracellular side of the membrane. Residue asparagine 103 is glycosylated (N-linked (GlcNAc...) asparagine). Residues 114–134 (FVFWPFSLKLLWAPLVDAVYF) traverse the membrane as a helical segment. Residues 135 to 141 (KNFGRRK) lie on the Cytoplasmic side of the membrane. A helical membrane pass occupies residues 142-162 (SWLVPTQYILGIFMIYLSTQV). The Extracellular segment spans residues 163-256 (DRLLGNIDGR…FQPQPRGIVT (94 aa)). The helical transmembrane segment at 257–277 (LSDFLFFWGTVFLITTTLVAL) threads the bilayer. Topologically, residues 278 to 300 (LKKETREASVVKEETQGITDTYK) are cytoplasmic. The chain crosses the membrane as a helical span at residues 301-321 (LLFSIIKMPAVLAFCLLILTS). At 322–344 (KIGFSAADAVTGLKLVEEGVPKE) the chain is on the extracellular side. The helical transmembrane segment at 345–365 (HLALLAVPMVPLQIILPLLIS) threads the bilayer. The Cytoplasmic portion of the chain corresponds to 366–375 (KYTAGPQPLN). Residues 376-396 (IFYKAMPYRLLLGLEYALLVW) form a helical membrane-spanning segment. At 397 to 405 (WTPKVEHQG) the chain is on the extracellular side. The chain crosses the membrane as a helical span at residues 406–426 (GFPIYYYIIVLLSYALHQVTL). Over 427–509 (YSMYVSIMAF…LGGSCVTALD (83 aa)) the chain is Cytoplasmic. Residues 510 to 530 (GYYVESIVCVLIGFGWWFFLG) form a helical membrane-spanning segment. The Extracellular portion of the chain corresponds to 531 to 550 (PKFKKLQDEGPSSWKCKRTN).

The protein belongs to the SLC33A transporter family. Homodimerizes. As to expression, expressed in brain at all developmental stages. Detected in hippocampus, hypothalamus, cerebellum, cortex, olfactory bulb, and the ventral and dorsal anterior olfactory nucleus.

Its subcellular location is the endoplasmic reticulum membrane. The enzyme catalyses acetyl-CoA(in) = acetyl-CoA(out). Functionally, acetyl-CoA transporter that mediates active acetyl-CoA import through the endoplasmic reticulum (ER) membrane into the ER lumen where specific ER-based acetyl-CoA:lysine acetyltransferases are responsible for the acetylation of ER-based protein substrates, such as BACE1. Necessary for O-acetylation of gangliosides. This Rattus norvegicus (Rat) protein is Acetyl-coenzyme A transporter 1 (Slc33a1).